The following is a 682-amino-acid chain: MSRKQLALFEPVLLVQALTDAVKKLSPRAQWRNPVMFVVWAGSVLTTLLTLAMVTGQIAGSALFTGIISLWLWFTVLFANFAEALAEGRSKAQANSLKGVKKTAFARRLRAPRHDAQADNVPAAELRKGDIVLVKAGDIIPCDGEVIEGGASVDESAITGESAPVIRESGGDFASVTGGTRILSDWLVIACSVNPGETFLDRMIAMVEGAQRRKTPNEIALTILLIALTIVFLLATATLWPFSAWGGNAVSVTVLVALLVCLIPTTIGGLLSAIGVAGMSRMLGANVIATSGRAVEAAGDVDVLLLDKTGTITLGNRQASDFIPARGVDERTLADAAQLASLADETPEGRSIVILAKQRFNLRERDVQSLHATFVPFTAQSRMSGINIDNRMIRKGSVDAIRRHVESNGGHFPADVEQNVENVARLGATPLVVVEGARVLGVIALKDIVKGGIKERFAQLRKMGIKTVMITGDNRLTAAAIAAEAGVDDFLAEATPEAKLALIRQYQAEGRLVAMTGDGTNDAPALAQADVAVAMNSGTQAAKEAGNMVDLDSNPTKLIEVVHIGKQMLMTRGSLTTFSIANDVAKYFAIIPAAFAATYPQLNALNVMGLHSPNSAILSAVIFNALIIIFLIPLALKGVSYKPLSASAMLRRNLWIYGLGGLLVPFIGIKVIDVLLTLLGLA.

Helical transmembrane passes span 34–54, 58–78, 219–239, and 254–274; these read PVMF…LAMV, IAGS…TVLF, IALT…TATL, and VLVA…LSAI. D307 serves as the catalytic 4-aspartylphosphate intermediate. ATP-binding positions include D344, E348, 377–384, and K395; that span reads FTAQSRMS. Residues D518 and D522 each contribute to the Mg(2+) site. A run of 3 helical transmembrane segments spans residues 588 to 608, 616 to 636, and 662 to 682; these read FAII…LNVM, AILS…PLAL, and LLVP…LGLA.

Belongs to the cation transport ATPase (P-type) (TC 3.A.3) family. Type IA subfamily. As to quaternary structure, the system is composed of three essential subunits: KdpA, KdpB and KdpC.

The protein localises to the cell inner membrane. It catalyses the reaction K(+)(out) + ATP + H2O = K(+)(in) + ADP + phosphate + H(+). Its function is as follows. Part of the high-affinity ATP-driven potassium transport (or Kdp) system, which catalyzes the hydrolysis of ATP coupled with the electrogenic transport of potassium into the cytoplasm. This subunit is responsible for energy coupling to the transport system and for the release of the potassium ions to the cytoplasm. This Salmonella dublin (strain CT_02021853) protein is Potassium-transporting ATPase ATP-binding subunit.